The sequence spans 905 residues: DNA gyrase subunit A (905 aa).

One can recognise a Topo IIA-type catalytic domain in the interval 35–524 (IPDVRDGLKP…GEFDQDIEDL (490 aa)). Y123 serves as the catalytic O-(5'-phospho-DNA)-tyrosine intermediate. Residues 551–557 (QKRGGKG) carry the GyrA-box motif.

This sequence belongs to the type II topoisomerase GyrA/ParC subunit family. In terms of assembly, heterotetramer, composed of two GyrA and two GyrB chains. In the heterotetramer, GyrA contains the active site tyrosine that forms a transient covalent intermediate with DNA, while GyrB binds cofactors and catalyzes ATP hydrolysis.

It is found in the cytoplasm. The catalysed reaction is ATP-dependent breakage, passage and rejoining of double-stranded DNA.. A type II topoisomerase that negatively supercoils closed circular double-stranded (ds) DNA in an ATP-dependent manner to modulate DNA topology and maintain chromosomes in an underwound state. Negative supercoiling favors strand separation, and DNA replication, transcription, recombination and repair, all of which involve strand separation. Also able to catalyze the interconversion of other topological isomers of dsDNA rings, including catenanes and knotted rings. Type II topoisomerases break and join 2 DNA strands simultaneously in an ATP-dependent manner. The polypeptide is DNA gyrase subunit A (Rickettsia typhi (strain ATCC VR-144 / Wilmington)).